Here is a 235-residue protein sequence, read N- to C-terminus: Large ribosomal subunit protein uL1 (235 aa).

The protein belongs to the universal ribosomal protein uL1 family. Part of the 50S ribosomal subunit.

Functionally, binds directly to 23S rRNA. The L1 stalk is quite mobile in the ribosome, and is involved in E site tRNA release. Its function is as follows. Protein L1 is also a translational repressor protein, it controls the translation of the L11 operon by binding to its mRNA. The sequence is that of Large ribosomal subunit protein uL1 from Mycobacterium sp. (strain JLS).